A 317-amino-acid polypeptide reads, in one-letter code: Pectinesterase 31 (317 aa).

Residues threonine 91 and glutamine 121 each contribute to the substrate site. Aspartate 144 acts as the Proton donor in catalysis. Aspartate 165 acts as the Nucleophile in catalysis. Arginine 222 and tryptophan 224 together coordinate substrate.

The protein belongs to the pectinesterase family. In terms of tissue distribution, expressed in siliques.

The enzyme catalyses [(1-&gt;4)-alpha-D-galacturonosyl methyl ester](n) + n H2O = [(1-&gt;4)-alpha-D-galacturonosyl](n) + n methanol + n H(+). It functions in the pathway glycan metabolism; pectin degradation; 2-dehydro-3-deoxy-D-gluconate from pectin: step 1/5. Its activity is regulated as follows. Does not require salt for activity. Not inhibited by kiwi pectin methylesterase inhibitor (PMEI). In terms of biological role, acts in the modification of cell walls via demethylesterification of cell wall pectin. Acts in a blockwise manner, resulting in a cell wall rigidification. The chain is Pectinesterase 31 (PME31) from Arabidopsis thaliana (Mouse-ear cress).